The sequence spans 95 residues: Protein TusB (95 aa).

It belongs to the DsrH/TusB family. In terms of assembly, heterohexamer, formed by a dimer of trimers. The hexameric TusBCD complex contains 2 copies each of TusB, TusC and TusD. The TusBCD complex interacts with TusE.

It localises to the cytoplasm. Part of a sulfur-relay system required for 2-thiolation of 5-methylaminomethyl-2-thiouridine (mnm(5)s(2)U) at tRNA wobble positions. This Yersinia enterocolitica serotype O:8 / biotype 1B (strain NCTC 13174 / 8081) protein is Protein TusB.